A 503-amino-acid chain; its full sequence is UDP-N-acetylmuramoylalanine--D-glutamate ligase (503 aa).

An ATP-binding site is contributed by 129 to 135; it reads GTNGKTT.

It belongs to the MurCDEF family.

It is found in the cytoplasm. It catalyses the reaction UDP-N-acetyl-alpha-D-muramoyl-L-alanine + D-glutamate + ATP = UDP-N-acetyl-alpha-D-muramoyl-L-alanyl-D-glutamate + ADP + phosphate + H(+). It functions in the pathway cell wall biogenesis; peptidoglycan biosynthesis. In terms of biological role, cell wall formation. Catalyzes the addition of glutamate to the nucleotide precursor UDP-N-acetylmuramoyl-L-alanine (UMA). The polypeptide is UDP-N-acetylmuramoylalanine--D-glutamate ligase (Burkholderia multivorans (strain ATCC 17616 / 249)).